The chain runs to 84 residues: Hydramacin-1 (84 aa).

A signal peptide spans 1–24 (MRTVVFFILVSIFLVALKPTGTQA). A Pyrrolidone carboxylic acid modification is found at Gln25. Disulfide bonds link Cys29–Cys72, Cys36–Cys65, Cys51–Cys81, and Cys55–Cys83.

Expressed in the endodermal epithelium.

It localises to the secreted. Its subcellular location is the target cell membrane. In terms of biological role, cationic antimicrobial peptide potently active against Gram-positive and Gram-negative bacteria including multi-resistant human pathogenic strains. Is not active against the Gram-positive Coccus species, Gram-negative non-fermentation species and against the fungus C.albicans. It leads to aggregation of bacteria as an initial step of its bactericidal mechanism. Aggregated cells are connected via electron-dense contacts and adopt a thorn apple-like morphology. Hydramycin contains a belt of positively charged residues that separate two hydrophobic areas. This structure may explain the observed aggregation of bacteria, since each of these areas can immerse into the outer leaflets of the membranes of two individual bacteria. Is able to permeabilize membranes of viable bacteria at low and neutral pH values, but no pore-forming activity is not detected. The sequence is that of Hydramacin-1 from Hydra vulgaris (Hydra).